Here is a 558-residue protein sequence, read N- to C-terminus: Formate--tetrahydrofolate ligase (558 aa).

66–73 (TPAGEGKT) serves as a coordination point for ATP.

This sequence belongs to the formate--tetrahydrofolate ligase family.

It carries out the reaction (6S)-5,6,7,8-tetrahydrofolate + formate + ATP = (6R)-10-formyltetrahydrofolate + ADP + phosphate. It functions in the pathway one-carbon metabolism; tetrahydrofolate interconversion. The chain is Formate--tetrahydrofolate ligase from Neisseria meningitidis serogroup C (strain 053442).